The sequence spans 342 residues: Anthranilate phosphoribosyltransferase (342 aa).

Residues glycine 83, 86–87 (GD), threonine 91, 93–96 (NVST), 111–119 (KHGNRSVSG), and serine 123 each bind 5-phospho-alpha-D-ribose 1-diphosphate. Glycine 83 provides a ligand contact to anthranilate. Serine 95 serves as a coordination point for Mg(2+). Asparagine 114 lines the anthranilate pocket. Position 169 (arginine 169) interacts with anthranilate. Residues aspartate 228 and glutamate 229 each contribute to the Mg(2+) site.

The protein belongs to the anthranilate phosphoribosyltransferase family. Homodimer. Mg(2+) is required as a cofactor.

The catalysed reaction is N-(5-phospho-beta-D-ribosyl)anthranilate + diphosphate = 5-phospho-alpha-D-ribose 1-diphosphate + anthranilate. Its pathway is amino-acid biosynthesis; L-tryptophan biosynthesis; L-tryptophan from chorismate: step 2/5. Catalyzes the transfer of the phosphoribosyl group of 5-phosphorylribose-1-pyrophosphate (PRPP) to anthranilate to yield N-(5'-phosphoribosyl)-anthranilate (PRA). The polypeptide is Anthranilate phosphoribosyltransferase (Halorhodospira halophila (strain DSM 244 / SL1) (Ectothiorhodospira halophila (strain DSM 244 / SL1))).